The following is a 351-amino-acid chain: DNA polymerase IV (351 aa).

In terms of domain architecture, UmuC spans 4 to 185 (IIHVDMDCFF…LPLAKIPGVG (182 aa)). Residues Asp8 and Asp103 each coordinate Mg(2+). Glu104 is a catalytic residue.

The protein belongs to the DNA polymerase type-Y family. Monomer. Mg(2+) serves as cofactor.

The protein localises to the cytoplasm. It carries out the reaction DNA(n) + a 2'-deoxyribonucleoside 5'-triphosphate = DNA(n+1) + diphosphate. In terms of biological role, poorly processive, error-prone DNA polymerase involved in untargeted mutagenesis. Copies undamaged DNA at stalled replication forks, which arise in vivo from mismatched or misaligned primer ends. These misaligned primers can be extended by PolIV. Exhibits no 3'-5' exonuclease (proofreading) activity. May be involved in translesional synthesis, in conjunction with the beta clamp from PolIII. The protein is DNA polymerase IV of Escherichia coli (strain ATCC 8739 / DSM 1576 / NBRC 3972 / NCIMB 8545 / WDCM 00012 / Crooks).